Here is a 377-residue protein sequence, read N- to C-terminus: Chaperone protein DnaJ (377 aa).

The 66-residue stretch at 5 to 70 (DYYEVLGVSR…DKKAAYDQFG (66 aa)) folds into the J domain. Residues 133-211 (GLTKELRIPT…CHGDGRVEKS (79 aa)) form a CR-type zinc finger. The Zn(2+) site is built by Cys146, Cys149, Cys163, Cys166, Cys185, Cys188, Cys199, and Cys202. CXXCXGXG motif repeat units lie at residues 146 to 153 (CDLCEGSG), 163 to 170 (CGTCHGQG), 185 to 192 (CPTCHGRG), and 199 to 206 (CTKCHGDG).

The protein belongs to the DnaJ family. In terms of assembly, homodimer. Zn(2+) serves as cofactor.

Its subcellular location is the cytoplasm. In terms of biological role, participates actively in the response to hyperosmotic and heat shock by preventing the aggregation of stress-denatured proteins and by disaggregating proteins, also in an autonomous, DnaK-independent fashion. Unfolded proteins bind initially to DnaJ; upon interaction with the DnaJ-bound protein, DnaK hydrolyzes its bound ATP, resulting in the formation of a stable complex. GrpE releases ADP from DnaK; ATP binding to DnaK triggers the release of the substrate protein, thus completing the reaction cycle. Several rounds of ATP-dependent interactions between DnaJ, DnaK and GrpE are required for fully efficient folding. Also involved, together with DnaK and GrpE, in the DNA replication of plasmids through activation of initiation proteins. This Shewanella baltica (strain OS223) protein is Chaperone protein DnaJ.